A 903-amino-acid polypeptide reads, in one-letter code: DNA gyrase subunit A (903 aa).

Residues leucine 36–leucine 499 form the Topo IIA-type catalytic domain. Tyrosine 124 serves as the catalytic O-(5'-phospho-DNA)-tyrosine intermediate. The GyrA-box motif lies at glutamine 526–glycine 532. Basic and acidic residues predominate over residues valine 881–glutamate 895. Residues valine 881–glutamate 903 form a disordered region.

The protein belongs to the type II topoisomerase GyrA/ParC subunit family. In terms of assembly, heterotetramer, composed of two GyrA and two GyrB chains. In the heterotetramer, GyrA contains the active site tyrosine that forms a transient covalent intermediate with DNA, while GyrB binds cofactors and catalyzes ATP hydrolysis.

The protein resides in the cytoplasm. It catalyses the reaction ATP-dependent breakage, passage and rejoining of double-stranded DNA.. A type II topoisomerase that negatively supercoils closed circular double-stranded (ds) DNA in an ATP-dependent manner to modulate DNA topology and maintain chromosomes in an underwound state. Negative supercoiling favors strand separation, and DNA replication, transcription, recombination and repair, all of which involve strand separation. Also able to catalyze the interconversion of other topological isomers of dsDNA rings, including catenanes and knotted rings. Type II topoisomerases break and join 2 DNA strands simultaneously in an ATP-dependent manner. This Fibrobacter succinogenes (strain ATCC 19169 / S85) protein is DNA gyrase subunit A.